A 97-amino-acid polypeptide reads, in one-letter code: HssA/B-like protein 32 (97 aa).

Disordered stretches follow at residues M1 to S23 and A62 to S97. A compositionally biased stretch (gly residues) spans A62–G74. Residues S75–G88 show a composition bias toward basic residues.

This sequence belongs to the hssA/B family.

In Dictyostelium discoideum (Social amoeba), this protein is HssA/B-like protein 32 (hssl32).